The sequence spans 96 residues: Defensin-like protein 151 (96 aa).

An N-terminal signal peptide occupies residues 1–29 (MKKPSQLSATILTIFVILAIGVMVKETLG). Cystine bridges form between C35–C88, C48–C68, C53–C82, and C57–C84.

It belongs to the DEFL family.

It localises to the secreted. This chain is Defensin-like protein 151 (LCR17), found in Arabidopsis thaliana (Mouse-ear cress).